Consider the following 360-residue polypeptide: Probable L-asparaginase 1 (360 aa).

A signal peptide spans 1 to 16 (MWRSIISFLFFSVALC). 3 N-linked (GlcNAc...) asparagine glycosylation sites follow: Asn-27, Asn-35, and Asn-40. Residues 39-359 (PNVTIFAMGG…QNITDIFSLE (321 aa)) enclose the Asparaginase/glutaminase domain. The active-site O-isoaspartyl threonine intermediate is Thr-49. Asn-82 carries N-linked (GlcNAc...) asparagine glycosylation. Residue Ser-96 coordinates substrate. Asn-106 is a glycosylation site (N-linked (GlcNAc...) asparagine). 129 to 130 (TD) is a substrate binding site. Asn-144, Asn-179, Asn-246, Asn-302, and Asn-351 each carry an N-linked (GlcNAc...) asparagine glycan.

The protein belongs to the asparaginase 1 family.

Its subcellular location is the secreted. The protein localises to the cell wall. It catalyses the reaction L-asparagine + H2O = L-aspartate + NH4(+). This is Probable L-asparaginase 1 from Schizosaccharomyces pombe (strain 972 / ATCC 24843) (Fission yeast).